The sequence spans 252 residues: Type II secretion system protein N (252 aa).

Over 1 to 4 (MKNR) the chain is Cytoplasmic. The chain crosses the membrane as a helical span at residues 5 to 25 (LTIGLLLAAIYLFWLLLSAPA). Over 26-252 (RLLALTLSDD…QGEWLSEEKK (227 aa)) the chain is Periplasmic.

Belongs to the GSP N family.

It is found in the cell inner membrane. Involved in a type II secretion system (T2SS, formerly general secretion pathway, GSP) for the export of proteins. Required for the translocation of pullulanase. This chain is Type II secretion system protein N (pulN), found in Klebsiella pneumoniae.